The sequence spans 560 residues: Formate--tetrahydrofolate ligase (560 aa).

69 to 76 (TPAGEGKS) contacts ATP.

This sequence belongs to the formate--tetrahydrofolate ligase family.

It catalyses the reaction (6S)-5,6,7,8-tetrahydrofolate + formate + ATP = (6R)-10-formyltetrahydrofolate + ADP + phosphate. It functions in the pathway one-carbon metabolism; tetrahydrofolate interconversion. This Listeria monocytogenes serovar 1/2a (strain ATCC BAA-679 / EGD-e) protein is Formate--tetrahydrofolate ligase.